The following is an 89-amino-acid chain: Small cysteine-rich protein 1 (89 aa).

The first 20 residues, Met-1 to Ala-20, serve as a signal peptide directing secretion. The propeptide occupies Asn-21–Glu-27.

This sequence belongs to the Cnidaria small cysteine-rich protein (SCRiP) family. gamma subfamily. Post-translationally, contains 4 disulfide bonds.

Its subcellular location is the secreted. It is found in the nematocyst. Its function is as follows. Induces neurotoxic symptoms on zebrafish. Has also been claimed to be implied in calcification, but tests on homolog proteins suggest that proteins of this family have a neurotoxic function and not a calcification function. In Acropora millepora (Staghorn coral), this protein is Small cysteine-rich protein 1.